We begin with the raw amino-acid sequence, 208 residues long: uncharacterized protein (208 aa).

This is an uncharacterized protein from Methanocaldococcus jannaschii (strain ATCC 43067 / DSM 2661 / JAL-1 / JCM 10045 / NBRC 100440) (Methanococcus jannaschii).